The primary structure comprises 112 residues: MQKIRSIKKNWEFQAIINKKNQIVTNYLIFYYVKSDFFEIGISVPKKFANAVKRNYYKRQIKNALYILWKKGEIFLNFRVVLIARKNFLPLSFETKYQKLAKIFKELKRNEK.

Belongs to the RnpA family. In terms of assembly, consists of a catalytic RNA component (M1 or rnpB) and a protein subunit.

It carries out the reaction Endonucleolytic cleavage of RNA, removing 5'-extranucleotides from tRNA precursor.. RNaseP catalyzes the removal of the 5'-leader sequence from pre-tRNA to produce the mature 5'-terminus. It can also cleave other RNA substrates such as 4.5S RNA. The protein component plays an auxiliary but essential role in vivo by binding to the 5'-leader sequence and broadening the substrate specificity of the ribozyme. The protein is Ribonuclease P protein component of Mesomycoplasma hyopneumoniae (strain 7448) (Mycoplasma hyopneumoniae).